The primary structure comprises 110 residues: Envelope glycoprotein N (110 aa).

A signal peptide spans 1 to 17; that stretch reads MTASTVALALFVASILG. At 18-80 the chain is on the virion surface side; it reads HCWVTANSTG…SLSSFSSVWA (63 aa). The span at 28–41 shows a compositional bias: polar residues; that stretch reads VASSTERSSPSTAG. The interval 28–51 is disordered; sequence VASSTERSSPSTAGLSARPSPGPT. Residues 81-101 form a helical membrane-spanning segment; it reads LINALLVVVATFFYLVYLCFF. The Intravirion segment spans residues 102-110; sequence KFVDEVVHA.

Belongs to the herpesviridae glycoprotein N family. As to quaternary structure, interacts (via N-terminus) with gM (via N-terminus). The gM-gN heterodimer forms the gCII complex. Post-translationally, O-glycosylated. Contains alpha 2,6-sialic acid residues. N-glycosylated.

It localises to the virion membrane. Its subcellular location is the host membrane. The protein localises to the host Golgi apparatus. It is found in the host trans-Golgi network. Its function is as follows. Envelope glycoprotein necessary for proper maturation of gM and modulation of its membrane fusion activity. Also plays a critical role in virion morphogenesis. This Homo sapiens (Human) protein is Envelope glycoprotein N.